A 530-amino-acid polypeptide reads, in one-letter code: AA9 family lytic polysaccharide monooxygenase C (530 aa).

Positions M1–A18 are cleaved as a signal peptide. H19 and H103 together coordinate Cu(2+). 2 disulfide bridges follow: C72-C190 and C114-C118. N150 is a glycosylation site (N-linked (GlcNAc...) asparagine). O2 is bound at residue Q185. Y187 serves as a coordination point for Cu(2+). Over residues Y238–S251 the composition is skewed to low complexity. Disordered regions lie at residues Y238–A279, E297–A329, Y348–S375, and G492–P512. Over residues K312–E324 the composition is skewed to basic and acidic residues. Over residues Y348–S368 the composition is skewed to low complexity.

The protein belongs to the polysaccharide monooxygenase AA9 family. The cofactor is Cu(2+).

It is found in the secreted. The enzyme catalyses [(1-&gt;4)-beta-D-glucosyl]n+m + reduced acceptor + O2 = 4-dehydro-beta-D-glucosyl-[(1-&gt;4)-beta-D-glucosyl]n-1 + [(1-&gt;4)-beta-D-glucosyl]m + acceptor + H2O.. Lytic polysaccharide monooxygenase (LPMO) that depolymerizes polysaccharides via the oxidation of scissile alpha- or beta-(1-4)-glycosidic bonds, yielding C1 or C4 oxidation products. Catalysis by LPMOs requires the reduction of the active-site copper from Cu(II) to Cu(I) by a reducing agent and H(2)O(2) or O(2) as a cosubstrate. Amorphous cellulose is not a suitable substrate for LPMO9C, which may act at the surface of cellulose microfibrils without any release of soluble products. The polypeptide is AA9 family lytic polysaccharide monooxygenase C (Geotrichum candidum (Oospora lactis)).